Here is a 1135-residue protein sequence, read N- to C-terminus: LRR receptor-like serine/threonine-protein kinase RGI2 (1135 aa).

A signal peptide spans 1-35 (MSLQMPIPRKKALTVSHFSITLSLFLAFFISSTSA). Residues 36–723 (STNEVSALIS…QRGVHSHRLR (688 aa)) are Extracellular-facing. Residues C69 and C76 are joined by a disulfide bond. N-linked (GlcNAc...) asparagine glycans are attached at residues N101 and N117. LRR repeat units follow at residues 105–129 (FTSL…IGDC), 130–153 (SELI…LGKL), 154–177 (KNLQ…LGDC), and 179–203 (SLKN…KIST). 4 short sequence motifs (small peptide recognition) span residues 186–187 (FD), 208–211 (RAGG), 231–236 (VLGLAA), and Y259. LRR repeat units lie at residues 226–250 (CRNL…LGQL), 251–274 (SKLQ…LGNC), 276–298 (ELIN…LGKL), 299–323 (QNLE…GFMK), 325–345 (LNAI…SFGN), 346–370 (LSNL…LSNC), 372–395 (KLVQ…GLLK), 397–418 (LNIF…LAGC), 419–442 (QNLQ…LFQL), 444–466 (NLTK…IGNC), 467–490 (TSLV…IGFL), 491–514 (QNLS…ISNC), 516–538 (QLQM…LSSL), 539–562 (TKLQ…LGHL), 564–586 (SLNR…LGHC), 587–610 (TNLQ…LFDI), 612–634 (DLDI…RISA), 635–658 (LNRL…LSGL), and 659–683 (ENLV…VFRQ). A glycan (N-linked (GlcNAc...) asparagine) is linked at N273. The Small peptide recognition motif lies at 281 to 283 (FLY). The Small peptide recognition motif lies at 329–332 (DLSM). An N-linked (GlcNAc...) asparagine glycan is attached at N345. Residues 351-353 (ELM) carry the Small peptide recognition motif. N-linked (GlcNAc...) asparagine glycans are attached at residues N358 and N369. Short sequence motifs (small peptide recognition) lie at residues 399–403 (IFLGW) and 425–428 (DLSQ). N444 carries N-linked (GlcNAc...) asparagine glycosylation. The Small peptide recognition signature appears at 447–451 (KLLLI). N-linked (GlcNAc...) asparagine glycosylation is present at N465. The short motif at 471–473 (RLR) is the Small peptide recognition element. N-linked (GlcNAc...) asparagine glycans are attached at residues N492, N502, N521, and N524. N-linked (GlcNAc...) asparagine glycosylation is found at N598 and N618. N-linked (GlcNAc...) asparagine glycans are attached at residues N665 and N707. Residues 724-744 (IAIGLLISVTAVLAVLGVLAV) form a helical membrane-spanning segment. Over 745 to 1135 (IRAKQMIRDD…ATSNVRPNLK (391 aa)) the chain is Cytoplasmic. T777 carries the post-translational modification Phosphothreonine. The region spanning 785–1066 (LVEGNVIGKG…KDVAAMLSEI (282 aa)) is the Protein kinase domain. ATP is bound by residues 791–799 (IGKGCSGIV) and K813. Y868 and Y907 each carry phosphotyrosine. Catalysis depends on D920, which acts as the Proton acceptor. A phosphotyrosine mark is found at Y963 and Y970. The segment at 1077–1135 (DGCSGSCNNGRERGKDDSTSSVMQQTAKYLRSSSTSFSASSLLYSSSSSATSNVRPNLK) is disordered. Residues 1108 to 1128 (SSSTSFSASSLLYSSSSSATS) show a composition bias toward low complexity.

The protein belongs to the protein kinase superfamily. Ser/Thr protein kinase family. In terms of assembly, binds to RGF peptides such as RGF1, GLV5/CLEL1/RGF2, GLV7/CLEL3/RGF3, GLV3/RGF4, GLV10/CLEL7/RGF5 and RGF10/CLELN; these interactions trigger the formation of heterodimers with SERK1. Interacts with UBP13. Phosphorylated and ubiquitinated upon interaction with RGF1, thus leading to activation a subsequent degradation. Stabilized by UBP12 and UBP13-mediated deubiquitination. Post-translationally, autophosphorylated. Specific to root meristems, especially in lateral root meristems (LRM).

The protein resides in the membrane. It carries out the reaction L-seryl-[protein] + ATP = O-phospho-L-seryl-[protein] + ADP + H(+). It catalyses the reaction L-threonyl-[protein] + ATP = O-phospho-L-threonyl-[protein] + ADP + H(+). In terms of biological role, together with RGI1, RGI3, RGI4 and RGI5, acts as a receptor of RGF peptides (e.g. RGF1, GLV5/CLEL1/RGF2, GLV7/CLEL3/RGF3, GLV3/RGF4, GLV10/CLEL7/RGF5 and RGF10/CLELN), peptide hormones which maintain the postembryonic root stem cell niche by regulating the expression levels and patterns of the transcription factor PLETHORA (PLT, e.g. PLT1 and PLT2). Links RGF peptides signal with their downstream components. This chain is LRR receptor-like serine/threonine-protein kinase RGI2, found in Arabidopsis thaliana (Mouse-ear cress).